The primary structure comprises 611 residues: MDASRDIGSFVVWDYVVFAGMLLISAAIGIYYAFAGGGQQTSKDFLMGGRSMSAVPVALSLTASFMSAVTVLGTPAEVYRFGAIFSIFVITYFFVVVISAEVFLPVFYRLGITSTYEYLELRFNRCIRLCGTILFIVQTILYTGIVIYAPALALNQVTGFDLWGAVVATGVVCTFYCTLGGLKAVVWTDVFQVGIMVAGFASVIIQASITQHGINKILSDAFNGGRLNFWNFDPNPLQRHTFWTIVIGGTFTWTTIYGVNQSQVQRYISCKSRLHAKLSLYVNLVGLWVILTCSIFCGLALYSRYRECDPWTSKKVSAIDQLMPYLVLDILKNYPGVPGLFVACAYSGTLSTVSSSINALAAVTVEDLIKPRFKSLSEKSLSWISQGMSVLYGALCIGMAALASLMGALLQAALSIFGMVGGPLLGLFSLGILVPFANSIGALTGLLAGFAISLWVGIGAQLYPPLPERTLPLPLETYGCNITHNGSDWMSTTEMPFSTSAFQIHNAERTPLMDNWYSLSYLYFSTIGTLTTLFVGILISLSTGGRKQNLDPRFLLTKQDFLSNFDVFKKRNHVLNYKLHPVEVGGTDNPAFNHVELNFTDHSGKINGTRL.

Residues 1 to 9 (MDASRDIGS) are Extracellular-facing. Residues 10–30 (FVVWDYVVFAGMLLISAAIGI) traverse the membrane as a helical segment. Residues 31–51 (YYAFAGGGQQTSKDFLMGGRS) are Cytoplasmic-facing. A helical transmembrane segment spans residues 52-72 (MSAVPVALSLTASFMSAVTVL). Over 73 to 86 (GTPAEVYRFGAIFS) the chain is Extracellular. The chain crosses the membrane as a helical span at residues 87–107 (IFVITYFFVVVISAEVFLPVF). Residues 108–132 (YRLGITSTYEYLELRFNRCIRLCGT) lie on the Cytoplasmic side of the membrane. The chain crosses the membrane as a helical span at residues 133 to 153 (ILFIVQTILYTGIVIYAPALA). The Extracellular segment spans residues 154-161 (LNQVTGFD). A helical membrane pass occupies residues 162-182 (LWGAVVATGVVCTFYCTLGGL). The Cytoplasmic segment spans residues 183–184 (KA). A helical transmembrane segment spans residues 185–205 (VVWTDVFQVGIMVAGFASVII). At 206–239 (QASITQHGINKILSDAFNGGRLNFWNFDPNPLQR) the chain is on the extracellular side. The chain crosses the membrane as a helical span at residues 240-260 (HTFWTIVIGGTFTWTTIYGVN). The Cytoplasmic segment spans residues 261–279 (QSQVQRYISCKSRLHAKLS). The helical transmembrane segment at 280 to 300 (LYVNLVGLWVILTCSIFCGLA) threads the bilayer. Residues 301 to 336 (LYSRYRECDPWTSKKVSAIDQLMPYLVLDILKNYPG) are Extracellular-facing. A helical transmembrane segment spans residues 337–359 (VPGLFVACAYSGTLSTVSSSINA). The Cytoplasmic portion of the chain corresponds to 360 to 389 (LAAVTVEDLIKPRFKSLSEKSLSWISQGMS). Residues 390 to 410 (VLYGALCIGMAALASLMGALL) form a helical membrane-spanning segment. Topologically, residues 411–415 (QAALS) are extracellular. A helical transmembrane segment spans residues 416-436 (IFGMVGGPLLGLFSLGILVPF). Residues 437-439 (ANS) are Cytoplasmic-facing. Residues 440 to 460 (IGALTGLLAGFAISLWVGIGA) traverse the membrane as a helical segment. The Extracellular portion of the chain corresponds to 461–518 (QLYPPLPERTLPLPLETYGCNITHNGSDWMSTTEMPFSTSAFQIHNAERTPLMDNWYS). Asn-485 is a glycosylation site (N-linked (GlcNAc...) asparagine). The chain crosses the membrane as a helical span at residues 519–539 (LSYLYFSTIGTLTTLFVGILI). The Cytoplasmic portion of the chain corresponds to 540–611 (SLSTGGRKQN…HSGKINGTRL (72 aa)). A PDZ-binding motif is present at residues 609–611 (TRL).

It belongs to the sodium:solute symporter (SSF) (TC 2.A.21) family. As to quaternary structure, interacts (via PDZ-binding motif) with PDZK1 (via PDZ domains 1 and 3); interaction increases nicotinate transport activity of SLC5A8. In terms of tissue distribution, expressed in brain, colon, kidney and in the ileum and jejunum of small intestine. In the kidney, expression occurred in the proximal tubule and the loop of Henle, being restricted to tubular epithelial cells in both the cortex and the medulla. In the colon, predominantly expressed in the distal half of the large bowel and in the most terminal ileum. Localized selectively in the luminal surface of crypts in the large intestine and to the brush border in the middle parts of crypts in the cecum. In the brain, expression was seen throughout, exclusively in neurons, including the cortex, hippocampus, cerebellum and pituitary gland (at protein level). Expression is reduced in oligodendrogliomas.

It is found in the apical cell membrane. It catalyses the reaction (S)-lactate(out) + 2 Na(+)(out) = (S)-lactate(in) + 2 Na(+)(in). The enzyme catalyses propanoate(out) + 2 Na(+)(out) = propanoate(in) + 2 Na(+)(in). The catalysed reaction is pyruvate(out) + 2 Na(+)(out) = pyruvate(in) + 2 Na(+)(in). It carries out the reaction acetate(out) + 2 Na(+)(out) = acetate(in) + 2 Na(+)(in). It catalyses the reaction butanoate(out) + 2 Na(+)(out) = butanoate(in) + 2 Na(+)(in). The enzyme catalyses nicotinate(out) + 2 Na(+)(out) = nicotinate(in) + 2 Na(+)(in). The catalysed reaction is (R)-3-hydroxybutanoate(out) + 2 Na(+)(out) = (R)-3-hydroxybutanoate(in) + 2 Na(+)(in). It carries out the reaction acetoacetate(out) + 2 Na(+)(out) = acetoacetate(in) + 2 Na(+)(in). It catalyses the reaction 4-methyl-2-oxopentanoate(out) + 2 Na(+)(out) = 4-methyl-2-oxopentanoate(in) + 2 Na(+)(in). The enzyme catalyses 5-oxo-L-proline(out) + 2 Na(+)(out) = 5-oxo-L-proline(in) + 2 Na(+)(in). The catalysed reaction is iodide(out) = iodide(in). It carries out the reaction chloride(in) = chloride(out). It catalyses the reaction nitrate(in) = nitrate(out). The enzyme catalyses bromide(in) = bromide(out). Its activity is regulated as follows. Transport of D-lactate and pyruvate stimulated by alpha-cyano-4-hydroxycinnamic acid, but inhibited by the short-chain fatty acids acetate, propionate and butyrate. Its function is as follows. Acts as an electrogenic sodium (Na(+)) and chloride (Cl-)-dependent sodium-coupled solute transporter, including transport of monocarboxylates (short-chain fatty acids including L-lactate, D-lactate, pyruvate, acetate, propionate, valerate and butyrate), mocarboxylate drugs (nicotinate, benzoate, salicylate and 5-aminosalicylate) and ketone bodies (beta-D-hydroxybutyrate, acetoacetate and alpha-ketoisocaproate), with a Na(+):substrate stoichiometry of between 4:1 and 2:1. Catalyzes passive carrier mediated diffusion of iodide. Mediates iodide transport from the thyrocyte into the colloid lumen through the apical membrane. May be responsible for the absorption of D-lactate and monocarboxylate drugs from the intestinal tract. May play a critical role in the entry of L-lactate and ketone bodies into neurons by a process driven by an electrochemical Na(+) gradient and hence contribute to the maintenance of the energy status and function of neurons. Mediates sodium-coupled electrogenic transport of pyroglutamate (5-oxo-L-proline). Can mediate the transport of chloride, bromide, iodide and nitrate ions when external concentration of sodium ions is reduced. The chain is Sodium-coupled monocarboxylate transporter 1 from Mus musculus (Mouse).